The following is a 135-amino-acid chain: Cytochrome c2 (135 aa).

An N-terminal signal peptide occupies residues 1–23; the sequence is MKKGFLAAGVFAAVAFASGAALA. Heme c-binding residues include C37, C40, H41, and M114.

It belongs to the cytochrome c family. Binds 1 heme c group covalently per subunit.

Functionally, cytochrome c2 is found mainly in purple, non-sulfur, photosynthetic bacteria where it functions as the electron donor to the oxidized bacteriochlorophyll in the photophosphorylation pathway. However, it may also have a role in the respiratory chain and is found in some non-photosynthetic bacteria. This is Cytochrome c2 (cycA) from Rhodospirillum rubrum (strain ATCC 11170 / ATH 1.1.1 / DSM 467 / LMG 4362 / NCIMB 8255 / S1).